The sequence spans 375 residues: Chaperone protein DnaJ (375 aa).

Positions D5–G69 constitute a J domain. The CR-type zinc-finger motif lies at G132–R214. Zn(2+)-binding residues include C145, C148, C162, C165, C188, C191, C202, and C205. CXXCXGXG motif repeat units lie at residues C145 to G152, C162 to G169, C188 to G195, and C202 to G209.

This sequence belongs to the DnaJ family. As to quaternary structure, homodimer. The cofactor is Zn(2+).

It localises to the cytoplasm. In terms of biological role, participates actively in the response to hyperosmotic and heat shock by preventing the aggregation of stress-denatured proteins and by disaggregating proteins, also in an autonomous, DnaK-independent fashion. Unfolded proteins bind initially to DnaJ; upon interaction with the DnaJ-bound protein, DnaK hydrolyzes its bound ATP, resulting in the formation of a stable complex. GrpE releases ADP from DnaK; ATP binding to DnaK triggers the release of the substrate protein, thus completing the reaction cycle. Several rounds of ATP-dependent interactions between DnaJ, DnaK and GrpE are required for fully efficient folding. Also involved, together with DnaK and GrpE, in the DNA replication of plasmids through activation of initiation proteins. The sequence is that of Chaperone protein DnaJ from Bacillus velezensis (strain DSM 23117 / BGSC 10A6 / LMG 26770 / FZB42) (Bacillus amyloliquefaciens subsp. plantarum).